The following is a 69-amino-acid chain: uncharacterized protein (69 aa).

The interval 23 to 46 is disordered; that stretch reads AENEGNRKENRRQMQSRNERGCNV. The segment covering 26-44 has biased composition (basic and acidic residues); sequence EGNRKENRRQMQSRNERGC.

This is an uncharacterized protein from Homo sapiens (Human).